The primary structure comprises 66 residues: Large ribosomal subunit protein bL35 (66 aa).

A compositionally biased stretch (basic residues) spans 1 to 44 (MPKLKSHRGAAKRFRKTASGAIKRRGAYRNHILTKKSTKQKRHL). Positions 1 to 48 (MPKLKSHRGAAKRFRKTASGAIKRRGAYRNHILTKKSTKQKRHLRVEA) are disordered.

Belongs to the bacterial ribosomal protein bL35 family.

This is Large ribosomal subunit protein bL35 from Legionella pneumophila (strain Corby).